The primary structure comprises 1746 residues: Non-reducing polyketide synthase ptaA (1746 aa).

The interval 4 to 227 is N-terminal acylcarrier protein transacylase domain (SAT); the sequence is NSGSGTSPWG…ALPVYGGLCH (224 aa). One can recognise a Ketosynthase family 3 (KS3) domain in the interval 361–796; sequence QSKIAIVGMS…GGNTTIAIEE (436 aa). Residues Cys-534, His-670, and His-714 each act as for beta-ketoacyl synthase activity in the active site. Residues 898–1218 are malonyl-CoA:ACP transacylase (MAT) domain; it reads FAFTGQGASY…LGALHLAGIP (321 aa). The interval 1286–1605 is product template (PT) domain; the sequence is TSTVHRVIGE…RLLLDRFFSA (320 aa). The tract at residues 1290–1425 is N-terminal hotdog fold; sequence HRVIGETFDG…ATLFYGKAND (136 aa). The PKS/mFAS DH domain maps to 1290–1600; the sequence is HRVIGETFDG…FRRYPRLLLD (311 aa). His-1322 acts as the Proton acceptor; for dehydratase activity in catalysis. The interval 1452–1600 is C-terminal hotdog fold; it reads VANRFSRNMA…FRRYPRLLLD (149 aa). Residue Asp-1511 is the Proton donor; for dehydratase activity of the active site. The region spanning 1671-1745 is the Carrier domain; the sequence is DSITVKAMAL…DLRAWLLEYY (75 aa). Ser-1705 is modified (O-(pantetheine 4'-phosphoryl)serine).

The catalysed reaction is holo-[ACP] + 8 malonyl-CoA + 8 H(+) = atrochrysone carboxyl-[ACP] + 8 CO2 + 8 CoA + 2 H2O. Its pathway is secondary metabolite biosynthesis. Functionally, non-reducing polyketide synthase; part of the gene cluster that mediates the biosynthesis of pestheic acid, a diphenyl ether which is a biosynthetic precursor of the unique chloropupukeananes. The biosynthesis initiates from condensation of acetate and malonate units catalyzed by the non-reducing PKS ptaA. As the ptaA protein is TE/CLC domain-deficient, hydrolysis and Claisen cyclization of the polyketide could be catalyzed by ptaB containing a beta-lactamase domain. The ptaB protein might hydrolyze the thioester bond between the ACP of ptaA and the intermediate to release atrochrysone carboxylic acid, which is spontaneously dehydrated to form endocrocin anthrone. Endocrocin anthrone is then converted to endocrocin, catalyzed by the anthrone oxygenase ptaC. Spontaneous decarboxylation of endocrocin occurs to generate emodin. An O-methyltransferase (ptaH or ptaI) could methylate emodin to form physcion. PtaJ could then catalyze the oxidative cleavage of physcion, and rotation of the intermediate could then afford desmethylisosulochrin. PtaF, a putative NADH-dependent oxidoreductase, might also participate in the oxidative cleavage step. Desmethylisosulochrin is then transformed by another O-methyltransferase (ptaH or ptaI) to form isosulochrin. Chlorination of isosulochrin by ptaM in the cyclohexadienone B ring then produces chloroisosulochrin. PtaE is responsible for the oxidative coupling reactions of both benzophenones isosulochrin and chloroisosulochrin to RES-1214-1 and pestheic acid respectively, regardless of chlorination. In Pestalotiopsis fici (strain W106-1 / CGMCC3.15140), this protein is Non-reducing polyketide synthase ptaA.